The primary structure comprises 357 residues: D-alanine--D-alanine ligase (357 aa).

Residues 145-339 (KEVMLYHGIQ…YGDLVMDIVN (195 aa)) enclose the ATP-grasp domain. Residue 172-225 (PFDFPVVVKPTSGGSSVGTHIIHNQEELESGLEDVFRFDNSAIVEEFTPGREFS) participates in ATP binding. Mg(2+)-binding residues include aspartate 294, glutamate 306, and asparagine 308.

Belongs to the D-alanine--D-alanine ligase family. It depends on Mg(2+) as a cofactor. The cofactor is Mn(2+).

The protein resides in the cytoplasm. It carries out the reaction 2 D-alanine + ATP = D-alanyl-D-alanine + ADP + phosphate + H(+). It functions in the pathway cell wall biogenesis; peptidoglycan biosynthesis. Cell wall formation. In Lacticaseibacillus paracasei (strain ATCC 334 / BCRC 17002 / CCUG 31169 / CIP 107868 / KCTC 3260 / NRRL B-441) (Lactobacillus paracasei), this protein is D-alanine--D-alanine ligase.